The chain runs to 345 residues: Glycerol-3-phosphate dehydrogenase [NAD(P)+] (345 aa).

Positions 11, 12, 32, 33, and 106 each coordinate NADPH. 3 residues coordinate sn-glycerol 3-phosphate: K106, G137, and S139. NADPH is bound at residue A141. Residues K192, D245, S255, R256, and N257 each coordinate sn-glycerol 3-phosphate. The Proton acceptor role is filled by K192. R256 contacts NADPH. NADPH is bound by residues V280 and E282.

The protein belongs to the NAD-dependent glycerol-3-phosphate dehydrogenase family.

Its subcellular location is the cytoplasm. The enzyme catalyses sn-glycerol 3-phosphate + NAD(+) = dihydroxyacetone phosphate + NADH + H(+). The catalysed reaction is sn-glycerol 3-phosphate + NADP(+) = dihydroxyacetone phosphate + NADPH + H(+). Its pathway is membrane lipid metabolism; glycerophospholipid metabolism. Does not seem to be inhibited by sn-glycerol 3-phosphate, in contrast to the E.coli homolog enzyme which is very sensitive to allosteric inhibition by G3P. Catalyzes the reduction of the glycolytic intermediate dihydroxyacetone phosphate (DHAP) to sn-glycerol 3-phosphate (G3P), the key precursor for phospholipid synthesis. This Bacillus subtilis (strain 168) protein is Glycerol-3-phosphate dehydrogenase [NAD(P)+].